The following is a 383-amino-acid chain: ATP phosphoribosyltransferase regulatory subunit (383 aa).

This sequence belongs to the class-II aminoacyl-tRNA synthetase family. HisZ subfamily. In terms of assembly, heteromultimer composed of HisG and HisZ subunits.

The protein resides in the cytoplasm. It participates in amino-acid biosynthesis; L-histidine biosynthesis; L-histidine from 5-phospho-alpha-D-ribose 1-diphosphate: step 1/9. In terms of biological role, required for the first step of histidine biosynthesis. May allow the feedback regulation of ATP phosphoribosyltransferase activity by histidine. This chain is ATP phosphoribosyltransferase regulatory subunit, found in Paraburkholderia phymatum (strain DSM 17167 / CIP 108236 / LMG 21445 / STM815) (Burkholderia phymatum).